The chain runs to 345 residues: DNA primase small subunit PriS (345 aa).

Active-site residues include D95 and D97. Positions 106, 108, 114, and 117 each coordinate Zn(2+). The Zinc knuckle motif motif lies at 106 to 117 (CNHEPGKVCPIC). D280 is a catalytic residue.

It belongs to the eukaryotic-type primase small subunit family. In terms of assembly, heterodimer of a small subunit (PriS) and a large subunit (PriL). It depends on Mg(2+) as a cofactor. Mn(2+) serves as cofactor.

Catalytic subunit of DNA primase, an RNA polymerase that catalyzes the synthesis of short RNA molecules used as primers for DNA polymerase during DNA replication. The small subunit contains the primase catalytic core and has DNA synthesis activity on its own, synthesizing DNA strands up to 3 kB. Binding to the large subunit stabilizes and modulates the activity, increasing the rate of DNA synthesis while decreasing the length of the DNA fragments, and conferring RNA synthesis capability for RNA fragments up to 150 bases. The DNA polymerase activity may enable DNA primase to also catalyze primer extension after primer synthesis. May also play a role in DNA repair. Displays gap-filling and strand-displacement activities. This Pyrococcus abyssi (strain GE5 / Orsay) protein is DNA primase small subunit PriS.